Reading from the N-terminus, the 688-residue chain is Transcription factor GTE9 (688 aa).

A disordered region spans residues 1–36 (MTERNGGFPGDYCFEAPGGDYDEGSDSPRVSEGSNC). The Bromo domain occupies 132-238 (TAVMLLMKQC…KFFEVRWKTL (107 aa)). One can recognise an NET domain in the interval 280 to 361 (ENVVDPAKRV…EHLREIQNKK (82 aa)). Residues 423-505 (GNSLGSVSGD…AQNEKQLPPE (83 aa)) form a disordered region. Ser478 bears the Phosphoserine mark. Over residues 491–500 (QDGNSAQNEK) the composition is skewed to polar residues. The transcription activation domain stretch occupies residues 505–688 (EKSYRAAILK…EIDIEEGEID (184 aa)). A coiled-coil region spans residues 534–613 (TRDPEKLQRE…QSVELNENAK (80 aa)). Residues 660–688 (FMKQDEDEEEADPLTSPAPEIDIEEGEID) form a disordered region.

In terms of assembly, interacts with BT1.

Its subcellular location is the nucleus. This is Transcription factor GTE9 (GTE9) from Arabidopsis thaliana (Mouse-ear cress).